The sequence spans 339 residues: Protein RecA (339 aa).

Position 66-73 (66-73 (GPESSGKT)) interacts with ATP.

Belongs to the RecA family.

The protein resides in the cytoplasm. In terms of biological role, can catalyze the hydrolysis of ATP in the presence of single-stranded DNA, the ATP-dependent uptake of single-stranded DNA by duplex DNA, and the ATP-dependent hybridization of homologous single-stranded DNAs. It interacts with LexA causing its activation and leading to its autocatalytic cleavage. The polypeptide is Protein RecA (Geobacter metallireducens (strain ATCC 53774 / DSM 7210 / GS-15)).